The chain runs to 248 residues: DNA repair protein RecO (248 aa).

The protein belongs to the RecO family.

In terms of biological role, involved in DNA repair and RecF pathway recombination. The chain is DNA repair protein RecO from Bradyrhizobium sp. (strain ORS 278).